A 698-amino-acid chain; its full sequence is Elongation factor G (698 aa).

In terms of domain architecture, tr-type G spans 11–291; that stretch reads THFRNIGIAA…AVVDYLPSPL (281 aa). GTP-binding positions include 20–27, 90–94, and 144–147; these read AHIDAGKT, DTPGH, and NKMD.

It belongs to the TRAFAC class translation factor GTPase superfamily. Classic translation factor GTPase family. EF-G/EF-2 subfamily.

It is found in the cytoplasm. In terms of biological role, catalyzes the GTP-dependent ribosomal translocation step during translation elongation. During this step, the ribosome changes from the pre-translocational (PRE) to the post-translocational (POST) state as the newly formed A-site-bound peptidyl-tRNA and P-site-bound deacylated tRNA move to the P and E sites, respectively. Catalyzes the coordinated movement of the two tRNA molecules, the mRNA and conformational changes in the ribosome. This chain is Elongation factor G, found in Deinococcus radiodurans (strain ATCC 13939 / DSM 20539 / JCM 16871 / CCUG 27074 / LMG 4051 / NBRC 15346 / NCIMB 9279 / VKM B-1422 / R1).